The primary structure comprises 151 residues: Methylglyoxal synthase (151 aa).

Positions 6–151 (RVMPAHKHIA…DYDAYLAERV (146 aa)) constitute an MGS-like domain. Residues H19, K23, 45–48 (TGTT), and 65–66 (SG) contribute to the substrate site. The active-site Proton donor/acceptor is D71. H98 is a substrate binding site.

It belongs to the methylglyoxal synthase family.

It carries out the reaction dihydroxyacetone phosphate = methylglyoxal + phosphate. Its function is as follows. Catalyzes the formation of methylglyoxal from dihydroxyacetone phosphate. This Aliivibrio fischeri (strain ATCC 700601 / ES114) (Vibrio fischeri) protein is Methylglyoxal synthase.